A 236-amino-acid polypeptide reads, in one-letter code: Pyridoxine 5'-phosphate synthase (236 aa).

N6 provides a ligand contact to 3-amino-2-oxopropyl phosphate. Position 8 to 9 (D8 to H9) interacts with 1-deoxy-D-xylulose 5-phosphate. R17 provides a ligand contact to 3-amino-2-oxopropyl phosphate. The active-site Proton acceptor is the H42. Residues R44 and H49 each contribute to the 1-deoxy-D-xylulose 5-phosphate site. E69 (proton acceptor) is an active-site residue. Position 99 (T99) interacts with 1-deoxy-D-xylulose 5-phosphate. The Proton donor role is filled by H190. 3-amino-2-oxopropyl phosphate is bound by residues G191 and G212 to H213.

This sequence belongs to the PNP synthase family. Homooctamer; tetramer of dimers.

The protein localises to the cytoplasm. It carries out the reaction 3-amino-2-oxopropyl phosphate + 1-deoxy-D-xylulose 5-phosphate = pyridoxine 5'-phosphate + phosphate + 2 H2O + H(+). Its pathway is cofactor biosynthesis; pyridoxine 5'-phosphate biosynthesis; pyridoxine 5'-phosphate from D-erythrose 4-phosphate: step 5/5. In terms of biological role, catalyzes the complicated ring closure reaction between the two acyclic compounds 1-deoxy-D-xylulose-5-phosphate (DXP) and 3-amino-2-oxopropyl phosphate (1-amino-acetone-3-phosphate or AAP) to form pyridoxine 5'-phosphate (PNP) and inorganic phosphate. This is Pyridoxine 5'-phosphate synthase from Pelodictyon phaeoclathratiforme (strain DSM 5477 / BU-1).